A 330-amino-acid chain; its full sequence is Ribosomal RNA small subunit methyltransferase H (330 aa).

S-adenosyl-L-methionine-binding positions include 51–53 (GGH), Asp-70, Asp-118, and Gln-125. The interval 276-330 (STDSTPPGLPVPLPDRQPELRLLTRGAELPTEQETAANPRAASARLRAAERTREP) is disordered. The span at 311 to 321 (AANPRAASARL) shows a compositional bias: low complexity.

It belongs to the methyltransferase superfamily. RsmH family.

The protein resides in the cytoplasm. It carries out the reaction cytidine(1402) in 16S rRNA + S-adenosyl-L-methionine = N(4)-methylcytidine(1402) in 16S rRNA + S-adenosyl-L-homocysteine + H(+). Functionally, specifically methylates the N4 position of cytidine in position 1402 (C1402) of 16S rRNA. The chain is Ribosomal RNA small subunit methyltransferase H from Thermobifida fusca (strain YX).